Here is a 277-residue protein sequence, read N- to C-terminus: Energy-coupling factor transporter ATP-binding protein EcfA1 (277 aa).

The ABC transporter domain occupies 5–240 (LEVENLVFKY…SEDMVEIGLD (236 aa)). 40 to 47 (GQNGSGKS) provides a ligand contact to ATP. The active-site Proton acceptor is the Glu-166.

The protein belongs to the ABC transporter superfamily. Energy-coupling factor EcfA family. In terms of assembly, forms a stable energy-coupling factor (ECF) transporter complex composed of 2 membrane-embedded substrate-binding proteins (S component), 2 ATP-binding proteins (A component) and 2 transmembrane proteins (T component). In L.lactis forms a stable complex with EcfA' and EcfT and substrate-binding components. In E.coli forms a stable complex with EcfA', EcfT and individually with 3 tested substrate-binding components (BioY, NiaX and ThiT) with a stoichiometry of 1.1:1:1. The core ECF complex interacts with a number of substrate-specific binding components, including BioY, BioY2, HmpT, NiaX, PanT, QueT, RibU and ThiT.

It localises to the cell membrane. Its function is as follows. ATP-binding (A) component of a common energy-coupling factor (ECF) ABC-transporter complex. Unlike classic ABC transporters this ECF transporter provides the energy necessary to transport a number of different substrates. In this organism these probably include biotin, thiamine precursor, niacin, pantothenic acid, queuosine precursor, riboflavin and thiamine. Uptake of niacin or riboflavin into proteosomes containing EcfA1A2T and Niax or RibU has been demonstrated. Uptake requires hydrolyzable Mg-ATP and is substrate-specific; NiaX-containing proteosomes did not transport riboflavin. This chain is Energy-coupling factor transporter ATP-binding protein EcfA1, found in Lactococcus lactis subsp. cremoris (strain MG1363).